Consider the following 510-residue polypeptide: Archaeosine synthase subunit alpha (510 aa).

The 84-residue stretch at 427–510 (LGKFTINKAS…LKKGIAVKVR (84 aa)) folds into the PUA domain.

It belongs to the archaeosine synthase type 1 family. In terms of assembly, forms a robust complex with the archaeosine synthase beta subunit RaSEA, likely an alpha(2)beta(2) heterotetrameric structure. Formation of this complex highly increases lysine transfer activity.

It catalyses the reaction 7-cyano-7-carbaguanosine(15) in tRNA + L-lysine = 7-N-[(5S)-5-amino-5-carboxypentyl]formamidino-7-deazaguanosine(15) in tRNA. It participates in tRNA modification; archaeosine-tRNA biosynthesis. Functionally, functions in the biosynthesis of archaeosine, a modified nucleoside present in the dihydrouridine loop (D-loop) of archaeal tRNAs. Catalyzes the addition of L-lysine to the cyano group of 7-cyano-7-deazaguanine (preQ0)-modified tRNAs at position 15, to generate q0kN15-tRNA, a q0N lysine adduct identified as 7-N-[(5S)-5-amino-5-carboxypentyl]formamidino-7-deazaguanosine. This Thermoplasma acidophilum (strain ATCC 25905 / DSM 1728 / JCM 9062 / NBRC 15155 / AMRC-C165) protein is Archaeosine synthase subunit alpha.